The following is a 258-amino-acid chain: MSDLKAAALRALKLMDLTTLNDDDTDAKVIALCHDAKTPVGNTAAICIYPRFIPIAKKTLREQGTPEVRIATVTNFPYGNDDIEIAVAETKAAVAYGADEVDVVFPYRALMAGDEKVGFELVKQCKEACGDILLKVIIETGELKEEALIKKASQICIEAGADFIKTSTGKVPVNATPEYARMMLEVIRDMGVAEKVGFKPAGGVRTAEDAAAYLAMADDILGSEWADNMHYRFGASSLLTNLLNTLEVTDQVADPAAY.

Catalysis depends on aspartate 102, which acts as the Proton donor/acceptor. The Schiff-base intermediate with acetaldehyde role is filled by lysine 165. Lysine 199 acts as the Proton donor/acceptor in catalysis.

It belongs to the DeoC/FbaB aldolase family. DeoC type 2 subfamily.

The protein resides in the cytoplasm. The catalysed reaction is 2-deoxy-D-ribose 5-phosphate = D-glyceraldehyde 3-phosphate + acetaldehyde. Its pathway is carbohydrate degradation; 2-deoxy-D-ribose 1-phosphate degradation; D-glyceraldehyde 3-phosphate and acetaldehyde from 2-deoxy-alpha-D-ribose 1-phosphate: step 2/2. In terms of biological role, catalyzes a reversible aldol reaction between acetaldehyde and D-glyceraldehyde 3-phosphate to generate 2-deoxy-D-ribose 5-phosphate. The sequence is that of Deoxyribose-phosphate aldolase from Vibrio vulnificus (strain CMCP6).